We begin with the raw amino-acid sequence, 207 residues long: HTH-type transcriptional regulator BetI 2 (207 aa).

The 61-residue stretch at 8–68 folds into the HTH tetR-type domain; sequence PIRRQQLIKA…ATMRQILTDL (61 aa). The H-T-H motif DNA-binding region spans 31-50; that stretch reads TVMRIARHAGVSAGIISHYF.

Its pathway is amine and polyamine biosynthesis; betaine biosynthesis via choline pathway [regulation]. In terms of biological role, repressor involved in the biosynthesis of the osmoprotectant glycine betaine. It represses transcription of the choline transporter BetT and the genes of BetAB involved in the synthesis of glycine betaine. This Chromohalobacter salexigens (strain ATCC BAA-138 / DSM 3043 / CIP 106854 / NCIMB 13768 / 1H11) protein is HTH-type transcriptional regulator BetI 2.